A 543-amino-acid chain; its full sequence is Sarafotoxin (543 aa).

The signal sequence occupies residues 1 to 23 (MALLPRLAAGGLLLLLALAALEG). Positions 24-69 (KPAPSALSQLLEKRSEDQAAAGRIIDGGDTKQAARDPSPQRNVEPL) are excised as a propeptide. The tract at residues 45 to 65 (GRIIDGGDTKQAARDPSPQRN) is disordered. Repeat copies occupy residues 51 to 90 (GDTKQAARDPSPQRNVEPLCSCKDMSDKECLNFCHQDVIW), 91 to 130 (RDTKQAARDPSPQRNVEPLCTCNDMTDEECLNFCHQDVIW), 131 to 170 (RDTKQAARDPSPQRNVEPLCSCKDMTDKECLYFCHQDVIW), 171 to 210 (RDTKQAARDPSPQRNVEPLCTCNDMTDEECLNFCHQDVIW), 211 to 250 (RDTKQAARDPSPQRNVEPLCTCNDMTDEECLNFCHQDVIW), 251 to 290 (RDTKQAARDPSPQRNVEPLCTCKDMTDKECLYFCHQGIIW), 291 to 330 (RDTKQAARDPSPQRNVEPLCSCKDMSDKECLNFCHQDVIW), 331 to 370 (RDTKQAARDPSPQRNVEPLCTCNDMTDEECLNFCHQDVIW), 371 to 410 (RDTKQAARDPSPQRNVEPLCTCNDMTDEECLNFCHQDVIW), 411 to 450 (RDTKQAARDPSPQRNVEPLCSCKDMTDKECLYFCHQDVIW), 451 to 490 (RDTKQAARDPSPQRNVEPLCSCKDMSDKECLNFCHQDVIW), and 491 to 530 (RDTKQAARDPSPQRNVEPLCSCKDMTDKECLNFCHQDVIW). The 12 X 40 AA tandem repeats stretch occupies residues 51–530 (GDTKQAARDP…LNFCHQDVIW (480 aa)). Cystine bridges form between Cys-70–Cys-84 and Cys-72–Cys-80. Residues 92–109 (DTKQAARDPSPQRNVEPL) constitute a propeptide that is removed on maturation. Disulfide bonds link Cys-110-Cys-124 and Cys-112-Cys-120. The propeptide occupies 132–149 (DTKQAARDPSPQRNVEPL). Disulfide bonds link Cys-150-Cys-164 and Cys-152-Cys-160. The propeptide occupies 172 to 189 (DTKQAARDPSPQRNVEPL). 2 disulfide bridges follow: Cys-190-Cys-204 and Cys-192-Cys-200. Residues 212 to 229 (DTKQAARDPSPQRNVEPL) constitute a propeptide that is removed on maturation. Intrachain disulfides connect Cys-230–Cys-244 and Cys-232–Cys-240. A propeptide spanning residues 252–269 (DTKQAARDPSPQRNVEPL) is cleaved from the precursor. 2 disulfide bridges follow: Cys-270–Cys-284 and Cys-272–Cys-280. Positions 292–309 (DTKQAARDPSPQRNVEPL) are excised as a propeptide. 2 disulfides stabilise this stretch: Cys-310-Cys-324 and Cys-312-Cys-320. Positions 332–349 (DTKQAARDPSPQRNVEPL) are excised as a propeptide. 2 cysteine pairs are disulfide-bonded: Cys-350-Cys-364 and Cys-352-Cys-360. The propeptide occupies 372-389 (DTKQAARDPSPQRNVEPL). Disulfide bonds link Cys-390–Cys-404 and Cys-392–Cys-400. The propeptide occupies 412–429 (DTKQAARDPSPQRNVEPL). Intrachain disulfides connect Cys-430-Cys-444 and Cys-432-Cys-440. A propeptide spanning residues 452 to 469 (DTKQAARDPSPQRNVEPL) is cleaved from the precursor. Cystine bridges form between Cys-470–Cys-484 and Cys-472–Cys-480. Residues 492-509 (DTKQAARDPSPQRNVEPL) constitute a propeptide that is removed on maturation. 2 disulfide bridges follow: Cys-510/Cys-524 and Cys-512/Cys-520. A propeptide spanning residues 532-543 (NADTSANPEFLG) is cleaved from the precursor.

It belongs to the endothelin/sarafotoxin family. Expressed by the venom gland.

It localises to the secreted. In terms of biological role, vasoconstrictor activity. These toxins cause cardiac arrest probably as a result of coronary vasospasm. Functionally, vasoconstrictor activity. Causes cardiac arrest probably as a result of coronary vasospasm. Displays high agonistic activities towards endothelin-2 receptor (EDNRB) (displays affinity in the picomolar range) and endothelin-1 receptor (EDNRA) (lower affinities). The polypeptide is Sarafotoxin (Atractaspis engaddensis (Israeli burrowing asp)).